Here is a 723-residue protein sequence, read N- to C-terminus: Transcription factor E2F7 (723 aa).

A disordered region spans residues 121-146 (AEEEEEEELDDSCQYEALDESERRPS). Residues 122–139 (EEEEEEELDDSCQYEALD) are compositionally biased toward acidic residues. 2 DNA-binding regions span residues 147–216 (RKQK…VWHG) and 264–349 (RKDK…KWIG). Polar residues-rich tracts occupy residues 356–370 (SSNS…SNSG) and 395–405 (LISSAPSTPHR). Disordered stretches follow at residues 356 to 379 (SSNS…KMAR), 395 to 417 (LISS…YSRK), 489 to 546 (SLRK…ASFG), 650 to 689 (EHHG…SKSF), and 702 to 723 (QSAA…TAAN). The span at 494–503 (ERSEEDDHQT) shows a compositional bias: basic and acidic residues. Positions 520–535 (SESLSSSTRRSPVCSP) are enriched in low complexity.

The protein belongs to the E2F/DP family. In terms of assembly, homodimer and heterodimer: mainly forms homodimers and, to a lesser extent, heterodimers with e2f8.

The protein resides in the nucleus. Atypical E2F transcription factor that participates in various processes such as angiogenesis and polyploidization of specialized cells. Mainly acts as a transcription repressor that binds DNA independently of DP proteins and specifically recognizes the E2 recognition site 5'-TTTC[CG]CGC-3'. Directly represses transcription of classical E2F transcription factors such as e2f1. Acts as a regulator of S-phase by recognizing and binding the E2-related site 5'-TTCCCGCC-3' and mediating repression of G1/S-regulated genes. Acts as a promoter of sprouting angiogenesis, possibly by acting as a transcription activator and promoting expression of vegfa. The protein is Transcription factor E2F7 (e2f7) of Danio rerio (Zebrafish).